A 181-amino-acid polypeptide reads, in one-letter code: MSKAIKQNLADSKKMSAELFCLTYGAMVTEMLKDYEDPKDVTIQLDKMGFNMGTRLADDFLAKNANVPRCVDTRQIADVLCRNAIPCYLGISATASSWTSGDREFTITLEANPLTELVQVPAHLVSAGLSYSQLIAGAIRGALEAVHFKVYASATDTGANTEIRIRFDQVLKDSLPAGEDD.

Residue Cys-70 is the site of S-palmitoyl cysteine attachment.

This sequence belongs to the TRAPP small subunits family. BET3 subfamily. Homodimer. Part of the multisubunit TRAPP (transport protein particle) complex.

The protein localises to the golgi apparatus. The protein resides in the cis-Golgi network. It is found in the endoplasmic reticulum. Functionally, may play a role in vesicular transport from endoplasmic reticulum to Golgi. Required for the systemic spread of the RNAi response. The protein is Trafficking protein particle complex subunit 3 homolog (trpp-3) of Caenorhabditis elegans.